Reading from the N-terminus, the 197-residue chain is MLRPPPPSSVLTASAAAARPPASVVQPQRQAAHRRRAETLRLRRVFEMFDRDGDGVITPAELSGALCRLGARGEAPPAAAALDAVVAAYIAPGMAGLRFAEFEALHAELAGLGGRQAVAAAEAEEEKEADMREAFGVFDEDGDGYISAAELQAVLSRMGLPEAACMARVRDMIAAADRDSDGRVDYEEFKAMMAAGN.

The segment at 1-33 (MLRPPPPSSVLTASAAAARPPASVVQPQRQAAH) is disordered. Over residues 9-30 (SVLTASAAAARPPASVVQPQRQ) the composition is skewed to low complexity. EF-hand domains follow at residues 37–72 (AETL…LGAR), 126–161 (EKEA…MGLP), and 164–197 (ACMA…AAGN). The Ca(2+) site is built by D50, D52, D54, E61, D139, D141, D143, Y145, E150, D177, D179, D181, R183, and E188.

Its function is as follows. Potential calcium sensor. The chain is Probable calcium-binding protein CML21 (CML21) from Oryza sativa subsp. japonica (Rice).